The sequence spans 364 residues: Alanine racemase (364 aa).

Lys34 serves as the catalytic Proton acceptor; specific for D-alanine. Lys34 bears the N6-(pyridoxal phosphate)lysine mark. Arg129 contacts substrate. Catalysis depends on Tyr259, which acts as the Proton acceptor; specific for L-alanine. Met307 is a binding site for substrate.

This sequence belongs to the alanine racemase family. Pyridoxal 5'-phosphate serves as cofactor.

It catalyses the reaction L-alanine = D-alanine. The protein operates within amino-acid biosynthesis; D-alanine biosynthesis; D-alanine from L-alanine: step 1/1. Functionally, catalyzes the interconversion of L-alanine and D-alanine. May also act on other amino acids. This is Alanine racemase (alr) from Coxiella burnetii (strain RSA 493 / Nine Mile phase I).